We begin with the raw amino-acid sequence, 397 residues long: Lymphoid enhancer-binding factor 1 (397 aa).

Positions 1-60 (MPQLSGGGGGGDPELCATDEMIPFKDEGDPQKEKIFAEISHPEEEGDLADIKSSLVNESE) are CTNNB1-binding. A Glycyl lysine isopeptide (Lys-Gly) (interchain with G-Cter in SUMO) cross-link involves residue Lys25. A disordered region spans residues 59-102 (SEIIPASNGHEVVRQAPSSQEPYHDKAREHPDEGKHPDGGLYNK). Over residues 80 to 96 (PYHDKAREHPDEGKHPD) the composition is skewed to basic and acidic residues. A Phosphoserine modification is found at Ser130. Position 153 is a phosphothreonine; by NLK (Thr153). Phosphoserine; by NLK is present on Ser164. 2 disordered regions span residues 164–191 (SPGSHPSHIPSDVNSKQGMSRHPPAPEI) and 266–296 (VKQEHPHTDSDLMHVKPQHEQRKEQEPKRPH). A Glycyl lysine isopeptide (Lys-Gly) (interchain with G-Cter in SUMO) cross-link involves residue Lys267. Residues 267-294 (KQEHPHTDSDLMHVKPQHEQRKEQEPKR) show a composition bias toward basic and acidic residues. The segment at residues 297-365 (IKKPLNAFML…LHMQLYPGWS (69 aa)) is a DNA-binding region (HMG box). The interval 367–397 (RDNYGKKKKRKREKLQESTSGTGPRMTAAYI) is disordered.

Belongs to the TCF/LEF family. As to quaternary structure, binds the armadillo repeat of CTNNB1 and forms a stable complex. Binds TLE1, ALYREF/THOC4, MDFI and MDFIC. Interacts with NLK. Interacts with EP300 and PIASG. Interacts with DAZAP2. Post-translationally, phosphorylated at Thr-153 and/or Ser-164 by NLK. Phosphorylation by NLK at these sites represses LEF1-mediated transcriptional activation of target genes of the canonical Wnt signaling pathway. Expressed in Vgamma1.1 and Vgamma2 gamma-delta T-cells, however not expressed in gamma-delta thymocytes fated for Il17a expression (at protein level). Expressed in alpha-beta T-cell lineages. Expressed in the thymus. Found in distinct epithelial cell compartments of the skin and is abundant in the hair-producing progenitors of the follicle.

It is found in the nucleus. Functionally, transcription factor that binds DNA in a sequence-specific manner. Participates in the Wnt signaling pathway. Activates transcription of target genes in the presence of CTNNB1 and EP300. PIASG antagonizes both Wnt-dependent and Wnt-independent activation by LEF1. TLE1, TLE2, TLE3 and TLE4 repress transactivation mediated by LEF1 and CTNNB1. Regulates T-cell receptor alpha enhancer function. Required for IL17A expressing gamma-delta T-cell maturation and development, via binding to regulator loci of BLK to modulate expression. Acts as a positive regulator of odontoblast differentiation during mesenchymal tooth germ formation, expression is repressed during the bell stage by MSX1-mediated inhibition of CTNNB1 signaling. May play a role in hair cell differentiation and follicle morphogenesis. In Mus musculus (Mouse), this protein is Lymphoid enhancer-binding factor 1.